A 326-amino-acid polypeptide reads, in one-letter code: Protein-ribulosamine 3-kinase, chloroplastic (326 aa).

A chloroplast-targeting transit peptide spans 1-30 (MAVASLSICFSARPHLLLRNFSPRPKFVAM). 125–127 (EFI) is an ATP binding site. The Proton acceptor role is filled by Asp230.

Belongs to the fructosamine kinase family.

It is found in the plastid. It localises to the chloroplast. It catalyses the reaction N(6)-D-ribulosyl-L-lysyl-[protein] + ATP = N(6)-(3-O-phospho-D-ribulosyl)-L-lysyl-[protein] + ADP + H(+). It carries out the reaction N(6)-(D-erythrulosyl)-L-lysyl-[protein] + ATP = N(6)-(3-O-phospho-D-erythrulosyl)-L-lysyl-[protein] + ADP + H(+). In terms of biological role, initiates a process leading to the deglycation of proteins. Phosphorylates low-molecular-mass and protein-bound erythrulosamines and ribulosamines, but not fructosamines or psicosamines, on the third carbon of the sugar moiety. Protein-bound erythrulosamine 3-phosphates and ribulosamine 3-phosphates are unstable and decompose under physiological conditions. The polypeptide is Protein-ribulosamine 3-kinase, chloroplastic (Arabidopsis thaliana (Mouse-ear cress)).